Consider the following 170-residue polypeptide: MELKKFIRDIPDFPKKGIIFKDITPLLKDKEAFNLAIEKMKDYYKDFDIDYIVGIEARGFIIGTPLALALNKGFIPIRKPGKLPAERISTSYELEYGTNEIEIHRDAIQPGDKILLVDDLLATGGTVKAAIELINKLQGEIVSLGFLIELVDLKGREKLEGYDVFTLLQE.

The protein belongs to the purine/pyrimidine phosphoribosyltransferase family. As to quaternary structure, homodimer.

The protein resides in the cytoplasm. The enzyme catalyses AMP + diphosphate = 5-phospho-alpha-D-ribose 1-diphosphate + adenine. It functions in the pathway purine metabolism; AMP biosynthesis via salvage pathway; AMP from adenine: step 1/1. Its function is as follows. Catalyzes a salvage reaction resulting in the formation of AMP, that is energically less costly than de novo synthesis. The chain is Adenine phosphoribosyltransferase from Halothermothrix orenii (strain H 168 / OCM 544 / DSM 9562).